A 240-amino-acid polypeptide reads, in one-letter code: Ribosomal RNA large subunit methyltransferase E (240 aa).

Over residues 1 to 20 (MSKAGGNKGGSRTGGRGGAG) the composition is skewed to gly residues. Residues 1-33 (MSKAGGNKGGSRTGGRGGAGSSNLHVRVKKKAG) are disordered. Positions 92, 94, 115, 131, and 155 each coordinate S-adenosyl-L-methionine. K195 functions as the Proton acceptor in the catalytic mechanism.

The protein belongs to the class I-like SAM-binding methyltransferase superfamily. RNA methyltransferase RlmE family.

It localises to the cytoplasm. It carries out the reaction uridine(2552) in 23S rRNA + S-adenosyl-L-methionine = 2'-O-methyluridine(2552) in 23S rRNA + S-adenosyl-L-homocysteine + H(+). Its function is as follows. Specifically methylates the uridine in position 2552 of 23S rRNA at the 2'-O position of the ribose in the fully assembled 50S ribosomal subunit. The chain is Ribosomal RNA large subunit methyltransferase E from Brucella abortus (strain S19).